Reading from the N-terminus, the 202-residue chain is Large ribosomal subunit protein bL25 (202 aa).

Belongs to the bacterial ribosomal protein bL25 family. CTC subfamily. In terms of assembly, part of the 50S ribosomal subunit; part of the 5S rRNA/L5/L18/L25 subcomplex. Contacts the 5S rRNA. Binds to the 5S rRNA independently of L5 and L18.

Its function is as follows. This is one of the proteins that binds to the 5S RNA in the ribosome where it forms part of the central protuberance. This Rickettsia bellii (strain OSU 85-389) protein is Large ribosomal subunit protein bL25.